The following is a 435-amino-acid chain: Adenylosuccinate synthetase (435 aa).

GTP is bound by residues 17-23 and 45-47; these read GDEGKGK and GHT. Residue aspartate 18 is the Proton acceptor of the active site. Mg(2+) contacts are provided by aspartate 18 and glycine 45. IMP-binding positions include 18–21, 43–46, threonine 135, arginine 149, glutamine 230, threonine 245, and arginine 309; these read DEGK and NAGH. Histidine 46 serves as the catalytic Proton donor. 305 to 311 provides a ligand contact to substrate; the sequence is TVSGRAR. GTP-binding positions include arginine 311, 337–339, and 419–421; these read LLD and SVG.

This sequence belongs to the adenylosuccinate synthetase family. In terms of assembly, homodimer. Mg(2+) serves as cofactor.

The protein resides in the cytoplasm. The catalysed reaction is IMP + L-aspartate + GTP = N(6)-(1,2-dicarboxyethyl)-AMP + GDP + phosphate + 2 H(+). It participates in purine metabolism; AMP biosynthesis via de novo pathway; AMP from IMP: step 1/2. In terms of biological role, plays an important role in the de novo pathway of purine nucleotide biosynthesis. Catalyzes the first committed step in the biosynthesis of AMP from IMP. The sequence is that of Adenylosuccinate synthetase from Spiroplasma citri.